Here is a 237-residue protein sequence, read N- to C-terminus: Thrombin-like enzyme agkihpin-2 (237 aa).

Methionine 1 is a propeptide. Residues 2–228 (ILGDDECNIN…HLDWIENIIA (227 aa)) enclose the Peptidase S1 domain. A disulfide bridge links cysteine 27 with cysteine 43. The Charge relay system role is filled by histidine 42. N-linked (GlcNAc...) asparagine glycosylation occurs at asparagine 80. Catalysis depends on aspartate 87, which acts as the Charge relay system. 3 cysteine pairs are disulfide-bonded: cysteine 119-cysteine 189, cysteine 151-cysteine 168, and cysteine 179-cysteine 204. The active-site Charge relay system is the serine 183.

It belongs to the peptidase S1 family. Snake venom subfamily. As to expression, expressed by the venom gland (at protein level). Expressed by the venom gland.

Its subcellular location is the secreted. The hydrolysis of TAMe (tosyl-arginine methyl ester) substrate is activated by Ca(2+), Fe(3+), Mg(2+) and Zn(2+), and inhibited by EDTA, PMSF and DTT. Functionally, thrombin-like enzyme that shows fibrinogenolytic activity against bovine fibrinogen alpha and beta chains, but not gamma chain. Hydrolyzes fibrin. Enhances ADP-induced human platelet aggregation. Has arginine esterase activity for TAMe (tosyl-arginine methyl ester) substrate. Reduces thrombin-induced thrombosis. Does not have hemorrhagic activity. Reduces the motility of human liver cancer HepG2 cells in a wound-healing assay. The sequence is that of Thrombin-like enzyme agkihpin-2 from Gloydius halys (Chinese water mocassin).